The sequence spans 422 residues: UDP-N-acetylmuramoylalanine--D-glutamate ligase (422 aa).

102–108 (GTNGKTT) provides a ligand contact to ATP.

Belongs to the MurCDEF family.

The protein localises to the cytoplasm. The enzyme catalyses UDP-N-acetyl-alpha-D-muramoyl-L-alanine + D-glutamate + ATP = UDP-N-acetyl-alpha-D-muramoyl-L-alanyl-D-glutamate + ADP + phosphate + H(+). It participates in cell wall biogenesis; peptidoglycan biosynthesis. Cell wall formation. Catalyzes the addition of glutamate to the nucleotide precursor UDP-N-acetylmuramoyl-L-alanine (UMA). The polypeptide is UDP-N-acetylmuramoylalanine--D-glutamate ligase (Helicobacter pylori (strain HPAG1)).